The following is an 83-amino-acid chain: uncharacterized protein (83 aa).

A helical membrane pass occupies residues 58–78 (AVLLWIAIIATLGNIVVVGVV).

It is found in the membrane. This is an uncharacterized protein from Homo sapiens (Human).